The sequence spans 322 residues: Chromoplast-specific carotenoid-associated protein, chromoplastic (322 aa).

The N-terminal 58 residues, 1–58 (MAFVSQFNQLPCKTLALNPPQPQLTSKPSVFPIASIGATARAAAGKSLISVRPAFKVR), are a transit peptide targeting the chromoplast. Positions 67–88 (GEDKDEKYGDDSSVAVAEKEEE) are disordered.

The protein belongs to the PAP/fibrillin family. As to expression, expressed in corollas. Not detected in fruits, stems, leaves, and roots.

The protein localises to the plastid. It localises to the chromoplast. In terms of biological role, may be involved in carotenoid sequestration within chromoplasts. The protein is Chromoplast-specific carotenoid-associated protein, chromoplastic (CHRC) of Cucumis sativus (Cucumber).